The primary structure comprises 224 residues: dTDP-fucosamine acetyltransferase (224 aa).

Residues 94–224 (PALRQLASAA…VESTAYWLYR (131 aa)) form the N-acetyltransferase domain. Acetyl-CoA contacts are provided by residues 168–174 (LAGRGAG), N201, and R207. Residue Y208 is the Proton donor of the active site.

This sequence belongs to the WecD family. As to quaternary structure, homodimer.

It carries out the reaction dTDP-4-amino-4,6-dideoxy-alpha-D-galactose + acetyl-CoA = dTDP-4-acetamido-4,6-dideoxy-alpha-D-galactose + CoA + H(+). Its pathway is bacterial outer membrane biogenesis; enterobacterial common antigen biosynthesis. In terms of biological role, catalyzes the acetylation of dTDP-fucosamine (dTDP-4-amino-4,6-dideoxy-D-galactose) to dTDP-Fuc4NAc, which is utilized in the biosynthesis of the enterobacterial common antigen (ECA). This Escherichia coli O6:H1 (strain CFT073 / ATCC 700928 / UPEC) protein is dTDP-fucosamine acetyltransferase.